Reading from the N-terminus, the 2078-residue chain is Autophagy-related protein 2 homolog B (2078 aa).

Residues 13–108 (ACRYLLQRYL…EMVFRPRPRP (96 aa)) form the Chorein N-terminal domain. Phosphoserine occurs at positions 255 and 379. The segment at 473–495 (GSTFPSNLVHPTPLQKTSLPSRS) is disordered. The segment covering 486 to 495 (LQKTSLPSRS) has biased composition (polar residues). Residues Ser-497, Ser-840, Ser-886, Ser-899, and Ser-1008 each carry the phosphoserine modification. The tract at residues 868 to 888 (EEEENDGHYQEEEEGGAHSLK) is disordered. Positions 873–888 (DGHYQEEEEGGAHSLK) are enriched in basic and acidic residues. Phosphotyrosine is present on Tyr-1012. Phosphoserine is present on residues Ser-1016 and Ser-1018. The residue at position 1022 (Thr-1022) is a Phosphothreonine. A disordered region spans residues 1375–1405 (ADMKPGAFQRRSKVDSSGRSSSRGPVLPEAD). Ser-1526 carries the phosphoserine modification.

The protein belongs to the ATG2 family. In terms of assembly, interacts with WDR45/WIPI4.

The protein localises to the preautophagosomal structure membrane. It localises to the lipid droplet. The protein resides in the endoplasmic reticulum membrane. The catalysed reaction is a 1,2-diacyl-sn-glycero-3-phospho-L-serine(in) = a 1,2-diacyl-sn-glycero-3-phospho-L-serine(out). The enzyme catalyses a 1,2-diacyl-sn-glycero-3-phosphoethanolamine(in) = a 1,2-diacyl-sn-glycero-3-phosphoethanolamine(out). Functionally, lipid transfer protein required for both autophagosome formation and regulation of lipid droplet morphology and dispersion. Tethers the edge of the isolation membrane (IM) to the endoplasmic reticulum (ER) and mediates direct lipid transfer from ER to IM for IM expansion. Binds to the ER exit site (ERES), which is the membrane source for autophagosome formation, and extracts phospholipids from the membrane source and transfers them to ATG9 (ATG9A or ATG9B) to the IM for membrane expansion. Lipid transfer activity is enhanced by WDR45/WIPI4, which promotes ATG2B-association with phosphatidylinositol 3-monophosphate (PI3P)-containing membranes. The polypeptide is Autophagy-related protein 2 homolog B (Homo sapiens (Human)).